Here is a 1188-residue protein sequence, read N- to C-terminus: MSFQVRRDRSDDRSHRFNHQQTWIPRNSSTSSVVVNEPLLPPNTDRNSETLDAGSASRPVYLQRQHNASGPPSYNHHQRSSNIGPPPPNQHRRYNAPDNQHQRSDNIGPPQPNQHRRYNAPDNQHQRSDNSGPPQPYRHRRNNAPENQHQRSDNIGPPPPNRQRRNNASGTLPDNRQRVASRTRPVNQGKRVAKEENVVLTDPNLPQLVQELQEKLVKSSIECMICYDKVGRSANIWSCSSCYSIFHINCIKRWARAPTSVDLLAEKNQGDNWRCPGCQSVQLTSSKEISYRCFCGKRRDPPSDPYLTPHSCGEPCGKPLEKEFAPAETTEEDLCPHVCVLQCHPGPCPPCKAFAPPRSCPCGKKMVTTRCSERRSDLVCGQRCDKLLSCGRHQCERTCHVGPCDPCQVLVNATCFCKKKVETVICGDMNVKGELKAEDGVYSCSFNCGKPLGCGNHFCSEVCHPGPCGDCDLLPSRVKTCYCGNTRLEEQIRQSCLDPIPSCSNVCRKLLPCRLHTCNEMCHAGDCPPCLVQVNQKCRCGSTSRAVECYITTSSEAEKFVCAKPCGRKKNCGRHRCSERCCPLLNGKKNDLSGDWDPHVCQIPCQKKLRCGQHSCESLCHSGHCPPCLEMIFTDLTCACGRTSIPPPLSCGTPVPSCQLPCPIPQPCGHSDTHGCHFGDCPPCSTPVEKKCVGGHVVLRNIPCGLKDIRCTKICGKTRRCGMHACARTCHPEPCDSFNESEAGMRVTCRQKCGAPRTDCRHTCAALCHPSAPCPDLRCEFSVTITCSCGRITATVPCDAGGRSANGSNVYCAAYDEASVLQKLPAPLQPVESSGNRIPLGQRKLSCDDECAKLERKRVLQDAFDITPPNLEALHFSENSAMTEIISDLYRRDPKWVLAVEERCKFLVLGKARGSTSALKVHIFCPMQKDKRDTVRLIAERWKLGVSNAGWEPKRFTVVHVTAKSKPPTRIIGARGGAISIGGPHPPFYDSLVDMDPGLVVSFLDLPREANISALVLRFGGECELVWLNDKNALAVFHDHARAATAMRRLEHGSVYHGAVVVQSGGQSPSLNNVWGKLPGSSAWDVDKGNPWRRAVIQESDDSWGAEDSPIGGSSTDAQASALRSAKSNSPIVTSVNRWSVLEPKKASTSTLEPIAQIEESSSSKTTGKQPVEGSGEEVVDDWEKVCE.

Basic and acidic residues predominate over residues 1 to 15 (MSFQVRRDRSDDRSH). 2 disordered regions span residues 1–52 (MSFQ…ETLD) and 65–195 (QHNA…VAKE). Polar residues-rich tracts occupy residues 19–34 (HQQTWIPRNSSTSSVV) and 168–186 (ASGTLPDNRQRVASRTRPV). The segment at 223-279 (CMICYDKVGRSANIWSCSSCYSIFHINCIKRWARAPTSVDLLAEKNQGDNWRCPGCQ) adopts an RING-type; degenerate zinc-finger fold. NF-X1-type zinc fingers lie at residues 335–353 (CPHVCVLQCHPGPCPPCKA), 390–409 (CGRHQCERTCHVGPCDPCQV), 454–473 (CGNHFCSEVCHPGPCGDCDL), 513–532 (CRLHTCNEMCHAGDCPPCLV), 572–607 (CGRHRCSERCCPLLNGKKNDLSGDWDPHVCQIPCQK), 611–630 (CGQHSCESLCHSGHCPPCLE), 668–686 (CGHSDTHGCHFGDCPPCST), 721–751 (CGMHACARTCHPEPCDSFNESEAGMRVTCRQ), and 760–781 (CRHTCAALCHPSAPCPDLRCEF). Residues 894 to 963 (PKWVLAVEER…KRFTVVHVTA (70 aa)) form the R3H domain. Residues 1100 to 1188 (SDDSWGAEDS…VVDDWEKVCE (89 aa)) form a disordered region. Composition is skewed to polar residues over residues 1126–1138 (AKSNSPIVTSVNR) and 1159–1169 (EESSSSKTTGK).

It belongs to the NFX1 family. As to expression, expressed in seedlings, roots, stems, leaves, buds, flowers and siliques.

Its subcellular location is the nucleus. It functions in the pathway protein modification; protein ubiquitination. Functionally, mediates E2-dependent ubiquitination. Confers resistance to osmotic stress such as high salinity. Promotes H(2)O(2) production. Negative regulator of some defense-related genes via an salicylic acid (SA)-dependent signaling pathway. Confers susceptibility to the compatible phytopathogen Pseudomonas syringae pv. tomato strain DC3000 (Pst DC3000). Mediates resistance to type A trichothecenes (phytotoxins produced by phytopathogenic fungi). The polypeptide is NF-X1-type zinc finger protein NFXL1 (NFXL1) (Arabidopsis thaliana (Mouse-ear cress)).